The primary structure comprises 421 residues: Phaseolin, beta-type (421 aa).

The N-terminal stretch at 1–24 (MMRARVPLLLLGILFLASLSASFA) is a signal peptide. Residues 237–390 (KSLSKQDNTI…TFSGSGDEVM (154 aa)) form the Cupin type-1 domain. Residues Asn-252 and Asn-341 are each glycosylated (N-linked (GlcNAc...) asparagine).

Belongs to the 7S seed storage protein family. In terms of assembly, homotrimer that associates to form a dodecamer.

The protein localises to the vacuole. It is found in the aleurone grain. Functionally, major seed storage protein. The chain is Phaseolin, beta-type from Phaseolus vulgaris (Kidney bean).